The primary structure comprises 350 residues: Aminomethyltransferase (350 aa).

The protein belongs to the GcvT family. In terms of assembly, the glycine cleavage system is composed of four proteins: P, T, L and H.

The catalysed reaction is N(6)-[(R)-S(8)-aminomethyldihydrolipoyl]-L-lysyl-[protein] + (6S)-5,6,7,8-tetrahydrofolate = N(6)-[(R)-dihydrolipoyl]-L-lysyl-[protein] + (6R)-5,10-methylene-5,6,7,8-tetrahydrofolate + NH4(+). Functionally, the glycine cleavage system catalyzes the degradation of glycine. This is Aminomethyltransferase from Aquifex aeolicus (strain VF5).